The following is a 287-amino-acid chain: ATP synthase gamma chain (287 aa).

Belongs to the ATPase gamma chain family. F-type ATPases have 2 components, CF(1) - the catalytic core - and CF(0) - the membrane proton channel. CF(1) has five subunits: alpha(3), beta(3), gamma(1), delta(1), epsilon(1). CF(0) has three main subunits: a, b and c.

The protein localises to the cell membrane. In terms of biological role, produces ATP from ADP in the presence of a proton gradient across the membrane. The gamma chain is believed to be important in regulating ATPase activity and the flow of protons through the CF(0) complex. The sequence is that of ATP synthase gamma chain from Bacillus caldotenax.